The primary structure comprises 352 residues: ATP synthase subunit a 2 (352 aa).

Positions 1 to 26 (MRKKAISRILALVVPVLLSLNSQAFA) are cleaved as a signal peptide. A run of 7 helical transmembrane segments spans residues 112–132 (VVMI…AGAS), 172–192 (FLPY…LGLI), 195–215 (GATA…TFVI), 232–252 (HLTA…EILG), 264–284 (LFAN…ISFI), 289–309 (IVAV…ELFV), and 310–330 (AFLQ…LATA).

Belongs to the ATPase A chain family. F-type ATPases have 2 components, CF(1) - the catalytic core - and CF(0) - the membrane proton channel. CF(1) has five subunits: alpha(3), beta(3), gamma(1), delta(1), epsilon(1). CF(0) has four main subunits: a, b, b' and c.

Its subcellular location is the cell inner membrane. In terms of biological role, key component of the proton channel; it plays a direct role in the translocation of protons across the membrane. In Chlorobaculum tepidum (strain ATCC 49652 / DSM 12025 / NBRC 103806 / TLS) (Chlorobium tepidum), this protein is ATP synthase subunit a 2.